A 767-amino-acid chain; its full sequence is Syn-copalyl diphosphate synthase (767 aa).

The tract at residues 45–74 (GPMLISKSPPYPASEETREWEAEGQHEHTD) is disordered. Residues 59–74 (EETREWEAEGQHEHTD) show a composition bias toward basic and acidic residues. Lys233 contributes to the substrate binding site. Residues Asp365 and Asp367 each contribute to the Mg(2+) site. A DXDD motif motif is present at residues 365–368 (DIDD). Residue Lys453 coordinates substrate.

It depends on Mg(2+) as a cofactor.

It carries out the reaction (2E,6E,10E)-geranylgeranyl diphosphate = 9alpha-copalyl diphosphate. Functionally, catalyzes the conversion of geranylgeranyl diphosphate to the phytoalexin precursor syn-copalyl diphosphate. This Oryza sativa subsp. indica (Rice) protein is Syn-copalyl diphosphate synthase (CPS4).